Reading from the N-terminus, the 91-residue chain is Small ribosomal subunit protein bS20 (91 aa).

The span at 1 to 18 (MPLHKSAEKRLRQSDRKN) shows a compositional bias: basic and acidic residues. Positions 1 to 25 (MPLHKSAEKRLRQSDRKNARNRARK) are disordered.

The protein belongs to the bacterial ribosomal protein bS20 family.

Functionally, binds directly to 16S ribosomal RNA. This Chlorobium phaeovibrioides (strain DSM 265 / 1930) (Prosthecochloris vibrioformis (strain DSM 265)) protein is Small ribosomal subunit protein bS20.